Consider the following 184-residue polypeptide: UPF0149 protein PP_5201 (184 aa).

Belongs to the UPF0149 family.

The sequence is that of UPF0149 protein PP_5201 from Pseudomonas putida (strain ATCC 47054 / DSM 6125 / CFBP 8728 / NCIMB 11950 / KT2440).